The primary structure comprises 227 residues: Cytochrome c oxidase subunit 2 (227 aa).

Over 1–14 (MAYPFQLGFQDATS) the chain is Mitochondrial intermembrane. The helical transmembrane segment at 15 to 45 (PIMEELLHFHDHALMIVFLISSLVLYLISVM) threads the bilayer. At 46–59 (LTTSLTHTSTMDAQ) the chain is on the mitochondrial matrix side. The helical transmembrane segment at 60–87 (EVETIWTILPAMILIMIALPSLRILYMM) threads the bilayer. The Mitochondrial intermembrane portion of the chain corresponds to 88 to 227 (DEINNPYLTV…YFEKWSSSML (140 aa)). The Cu cation site is built by His-161, Cys-196, Glu-198, Cys-200, His-204, and Met-207. Position 198 (Glu-198) interacts with Mg(2+). A Phosphotyrosine modification is found at Tyr-218.

This sequence belongs to the cytochrome c oxidase subunit 2 family. In terms of assembly, component of the cytochrome c oxidase (complex IV, CIV), a multisubunit enzyme composed of 14 subunits. The complex is composed of a catalytic core of 3 subunits MT-CO1, MT-CO2 and MT-CO3, encoded in the mitochondrial DNA, and 11 supernumerary subunits COX4I, COX5A, COX5B, COX6A, COX6B, COX6C, COX7A, COX7B, COX7C, COX8 and NDUFA4, which are encoded in the nuclear genome. The complex exists as a monomer or a dimer and forms supercomplexes (SCs) in the inner mitochondrial membrane with NADH-ubiquinone oxidoreductase (complex I, CI) and ubiquinol-cytochrome c oxidoreductase (cytochrome b-c1 complex, complex III, CIII), resulting in different assemblies (supercomplex SCI(1)III(2)IV(1) and megacomplex MCI(2)III(2)IV(2)). Found in a complex with TMEM177, COA6, COX18, COX20, SCO1 and SCO2. Interacts with TMEM177 in a COX20-dependent manner. Interacts with COX20. Interacts with COX16. The cofactor is Cu cation.

It is found in the mitochondrion inner membrane. The enzyme catalyses 4 Fe(II)-[cytochrome c] + O2 + 8 H(+)(in) = 4 Fe(III)-[cytochrome c] + 2 H2O + 4 H(+)(out). Its function is as follows. Component of the cytochrome c oxidase, the last enzyme in the mitochondrial electron transport chain which drives oxidative phosphorylation. The respiratory chain contains 3 multisubunit complexes succinate dehydrogenase (complex II, CII), ubiquinol-cytochrome c oxidoreductase (cytochrome b-c1 complex, complex III, CIII) and cytochrome c oxidase (complex IV, CIV), that cooperate to transfer electrons derived from NADH and succinate to molecular oxygen, creating an electrochemical gradient over the inner membrane that drives transmembrane transport and the ATP synthase. Cytochrome c oxidase is the component of the respiratory chain that catalyzes the reduction of oxygen to water. Electrons originating from reduced cytochrome c in the intermembrane space (IMS) are transferred via the dinuclear copper A center (CU(A)) of subunit 2 and heme A of subunit 1 to the active site in subunit 1, a binuclear center (BNC) formed by heme A3 and copper B (CU(B)). The BNC reduces molecular oxygen to 2 water molecules using 4 electrons from cytochrome c in the IMS and 4 protons from the mitochondrial matrix. This is Cytochrome c oxidase subunit 2 (MT-CO2) from Rousettus leschenaultii (Leschenault's rousette).